The following is a 602-amino-acid chain: Potassium voltage-gated channel subfamily A member 5 (602 aa).

The tract at residues 1–202 is tetramerization domain; the sequence is MEISLVPLEN…FYQLGDEAME (202 aa). The Cytoplasmic portion of the chain corresponds to 1 to 238; that stretch reads MEISLVPLEN…LIFEYPESSG (238 aa). The tract at residues 58–107 is disordered; sequence EDANQGGRPLPPMAQELPQPRRLSAEDEEGEGDPGLGTVEEDQAPQDAGS. Serine 81 bears the Phosphoserine; by CK2 and PKA mark. Lysine 212 participates in a covalent cross-link: Glycyl lysine isopeptide (Lys-Gly) (interchain with G-Cter in SUMO). Residues 239–260 traverse the membrane as a helical segment; sequence SARAIAIVSVLVILISIITFCL. The Extracellular portion of the chain corresponds to 261–314; it reads ETLPEFRDERELLRHPPVPPQPPAPAPGINGSVSGALSSGPTVAPLLPRTLADP. The helical transmembrane segment at 315 to 336 threads the bilayer; the sequence is FFIVETTCVIWFTFELLVRFFA. The S-palmitoyl cysteine moiety is linked to residue cysteine 337. Topologically, residues 337-347 are cytoplasmic; that stretch reads CPSKAEFSRNI. A helical membrane pass occupies residues 348-368; the sequence is MNIIDVVAIFPYFITLGTELA. The Extracellular portion of the chain corresponds to 369–384; it reads EQQPGGGGQNGQQAMS. The helical; Voltage-sensor transmembrane segment at 385–405 threads the bilayer; sequence LAILRVIRLVRVFRIFKLSRH. At 406–420 the chain is on the cytoplasmic side; it reads SKGLQILGKTLQASM. The S4-S5 linker stretch occupies residues 407–420; sequence KGLQILGKTLQASM. A helical transmembrane segment spans residues 421 to 442; that stretch reads RELGLLIFFLFIGVILFSSAVY. Residues 443–456 are Extracellular-facing; it reads FAEADNHGSHFSSI. The segment at residues 457-468 is an intramembrane region (helical); the sequence is PDAFWWAVVTMT. Residues 469–474 carry the Selectivity filter motif; it reads TVGYGD. Residues 469–476 lie within the membrane without spanning it; that stretch reads TVGYGDMR. Over 477–483 the chain is Extracellular; it reads PITVGGK. A helical membrane pass occupies residues 484-512; it reads IVGSLCAIAGVLTIALPVPVIVSNFNYFY. Residues 513–602 lie on the Cytoplasmic side of the membrane; it reads HRETDHEEQA…CLDTSRETDL (90 aa). Residues 523–536 show a composition bias toward basic and acidic residues; the sequence is ALKEEQGNQRRESG. Positions 523 to 543 are disordered; that stretch reads ALKEEQGNQRRESGLDTGGQR. Residue lysine 525 forms a Glycyl lysine isopeptide (Lys-Gly) (interchain with G-Cter in SUMO) linkage. Residues serine 535, serine 546, and serine 569 each carry the phosphoserine; by PKA modification. The PDZ-binding motif lies at 600-602; sequence TDL.

It belongs to the potassium channel family. A (Shaker) (TC 1.A.1.2) subfamily. Kv1.5/KCNA5 sub-subfamily. In terms of assembly, homotetramer and heterotetramer of potassium channel proteins. Interacts with DLG1, which enhances channel currents. Forms a ternary complex with DLG1 and CAV3. Interacts with KCNAB1. Interacts with UBE2I. Interacts with XIRP2; the interaction is required for normal action potential configuration in the heart. In terms of processing, glycosylated. Sumoylated on Lys-212, and Lys-525, preferentially with SUMO3. Sumoylation regulates the voltage sensitivity of the channel. As to expression, expressed equally in atrium, ventricle, aorta and skeletal muscle. Weaker expression in brain.

The protein localises to the cell membrane. It carries out the reaction K(+)(in) = K(+)(out). Its function is as follows. Voltage-gated potassium channel that mediates transmembrane potassium transport in excitable membranes. Forms tetrameric potassium-selective channels through which potassium ions pass in accordance with their electrochemical gradient. The channel alternates between opened and closed conformations in response to the voltage difference across the membrane. Can form functional homotetrameric channels and heterotetrameric channels that contain variable proportions of KCNA1, KCNA2, KCNA4, KCNA5, and possibly other family members as well; channel properties depend on the type of alpha subunits that are part of the channel. Channel properties are modulated by cytoplasmic beta subunits that regulate the subcellular location of the alpha subunits and promote rapid inactivation. Homotetrameric channels display rapid activation and slow inactivation. Required for normal electrical conduction including formation of the infranodal ventricular conduction system and normal action potential configuration, as a result of its interaction with XIRP2. May play a role in regulating the secretion of insulin in normal pancreatic islets. This chain is Potassium voltage-gated channel subfamily A member 5 (Kcna5), found in Rattus norvegicus (Rat).